Reading from the N-terminus, the 103-residue chain is Small ribosomal subunit protein uS10 (103 aa).

Belongs to the universal ribosomal protein uS10 family. Part of the 30S ribosomal subunit.

Functionally, involved in the binding of tRNA to the ribosomes. In Stenotrophomonas maltophilia (strain R551-3), this protein is Small ribosomal subunit protein uS10.